The primary structure comprises 82 residues: Putative membrane protein insertion efficiency factor (82 aa).

The disordered stretch occupies residues 63–82 (PGGHDPVPESTILSKEKSVK).

This sequence belongs to the UPF0161 family.

The protein localises to the cell inner membrane. Functionally, could be involved in insertion of integral membrane proteins into the membrane. The chain is Putative membrane protein insertion efficiency factor from Protochlamydia amoebophila (strain UWE25).